Consider the following 139-residue polypeptide: Nucleoside diphosphate kinase (139 aa).

Residues K11, F59, R87, T93, R104, and N114 each coordinate ATP. H117 functions as the Pros-phosphohistidine intermediate in the catalytic mechanism.

Belongs to the NDK family. Homotetramer. Requires Mg(2+) as cofactor.

The protein resides in the cytoplasm. The catalysed reaction is a 2'-deoxyribonucleoside 5'-diphosphate + ATP = a 2'-deoxyribonucleoside 5'-triphosphate + ADP. It catalyses the reaction a ribonucleoside 5'-diphosphate + ATP = a ribonucleoside 5'-triphosphate + ADP. Functionally, major role in the synthesis of nucleoside triphosphates other than ATP. The ATP gamma phosphate is transferred to the NDP beta phosphate via a ping-pong mechanism, using a phosphorylated active-site intermediate. This Wolbachia pipientis subsp. Culex pipiens (strain wPip) protein is Nucleoside diphosphate kinase.